Consider the following 127-residue polypeptide: MDVEDTVKKLNLKFRNIEGERLILAITCDENKNVLMVAFMNEEALKKTLETGYMHYYSTSRKKLWRKGEESGNVQKLIKFYRDCDGDALLFIVEQKGVACHEGYYSCFHYKIEDGELKITGEYYSKR.

Asp-83 is a Mg(2+) binding site. Cys-84 serves as a coordination point for Zn(2+). Asp-85 and Asp-87 together coordinate Mg(2+). Cys-100 and Cys-107 together coordinate Zn(2+).

This sequence belongs to the PRA-CH family. As to quaternary structure, homodimer. The cofactor is Mg(2+). Zn(2+) is required as a cofactor.

The protein resides in the cytoplasm. It catalyses the reaction 1-(5-phospho-beta-D-ribosyl)-5'-AMP + H2O = 1-(5-phospho-beta-D-ribosyl)-5-[(5-phospho-beta-D-ribosylamino)methylideneamino]imidazole-4-carboxamide. It participates in amino-acid biosynthesis; L-histidine biosynthesis; L-histidine from 5-phospho-alpha-D-ribose 1-diphosphate: step 3/9. Catalyzes the hydrolysis of the adenine ring of phosphoribosyl-AMP. This Methanocaldococcus jannaschii (strain ATCC 43067 / DSM 2661 / JAL-1 / JCM 10045 / NBRC 100440) (Methanococcus jannaschii) protein is Phosphoribosyl-AMP cyclohydrolase.